The primary structure comprises 494 residues: Glutamate--tRNA ligase (494 aa).

Positions 9 to 19 (PSPTGDPHLGT) match the 'HIGH' region motif. Residues 250 to 254 (KLSKR) carry the 'KMSKS' region motif. K253 lines the ATP pocket.

The protein belongs to the class-I aminoacyl-tRNA synthetase family. Glutamate--tRNA ligase type 1 subfamily. Monomer.

The protein resides in the cytoplasm. The enzyme catalyses tRNA(Glu) + L-glutamate + ATP = L-glutamyl-tRNA(Glu) + AMP + diphosphate. Catalyzes the attachment of glutamate to tRNA(Glu) in a two-step reaction: glutamate is first activated by ATP to form Glu-AMP and then transferred to the acceptor end of tRNA(Glu). The chain is Glutamate--tRNA ligase from Pseudoalteromonas translucida (strain TAC 125).